Here is a 78-residue protein sequence, read N- to C-terminus: Small integral membrane protein 10-like protein 2A (78 aa).

The protein is Small integral membrane protein 10-like protein 2A of Homo sapiens (Human).